Reading from the N-terminus, the 340-residue chain is Histidinol-phosphate aminotransferase (340 aa).

Lys204 bears the N6-(pyridoxal phosphate)lysine mark.

Belongs to the class-II pyridoxal-phosphate-dependent aminotransferase family. Histidinol-phosphate aminotransferase subfamily. Pyridoxal 5'-phosphate is required as a cofactor.

It catalyses the reaction L-histidinol phosphate + 2-oxoglutarate = 3-(imidazol-4-yl)-2-oxopropyl phosphate + L-glutamate. Its pathway is amino-acid biosynthesis; L-histidine biosynthesis; L-histidine from 5-phospho-alpha-D-ribose 1-diphosphate: step 7/9. In Thermococcus gammatolerans (strain DSM 15229 / JCM 11827 / EJ3), this protein is Histidinol-phosphate aminotransferase.